The primary structure comprises 49 residues: MRVGVALACTECKRRNYMTNKNKKNDPDRIELKKYCKWCKTQTVHKETK.

The protein belongs to the bacterial ribosomal protein bL33 family.

This chain is Large ribosomal subunit protein bL33, found in Heliobacterium modesticaldum (strain ATCC 51547 / Ice1).